Reading from the N-terminus, the 133-residue chain is MKNWLDEIKWDADGLVPAIAQDHKTGRVLMMAWMNREALELTAAENRAIYWSRSRGKLWRKGEESGHVQTLHEMRLDCDADVIILMVEQIGDIACHTGRQSCFYRVFENGDWKTVDPVLKDPHAIYSAGHKHE.

D77 serves as a coordination point for Mg(2+). C78 provides a ligand contact to Zn(2+). 2 residues coordinate Mg(2+): D79 and D81. Zn(2+)-binding residues include C95 and C102.

It belongs to the PRA-CH family. As to quaternary structure, homodimer. It depends on Mg(2+) as a cofactor. Requires Zn(2+) as cofactor.

The protein resides in the cytoplasm. It catalyses the reaction 1-(5-phospho-beta-D-ribosyl)-5'-AMP + H2O = 1-(5-phospho-beta-D-ribosyl)-5-[(5-phospho-beta-D-ribosylamino)methylideneamino]imidazole-4-carboxamide. The protein operates within amino-acid biosynthesis; L-histidine biosynthesis; L-histidine from 5-phospho-alpha-D-ribose 1-diphosphate: step 3/9. Its function is as follows. Catalyzes the hydrolysis of the adenine ring of phosphoribosyl-AMP. In Pseudomonas fluorescens (strain Pf0-1), this protein is Phosphoribosyl-AMP cyclohydrolase.